Consider the following 224-residue polypeptide: MITFDQLDTELQALENPNTIKIFRNHGCPDSLDLYGLKIGDLKKIIRREKLTKNHELAVKLIESNNSDLIYLGLLAINPNKITTEQIEKWNIAFRETWSQLTFGLASIVSKRDDALLFAKTWIESDYDLTKSMGWQIYSEHINNLPEAETLLQRAKETLQTETNRTRYSMNGFIITCGIYKDDLHEKAMEAAKSVGKVHVNLGNTACKVPDAISYIEKARNRTK.

This is an uncharacterized protein from Listeria monocytogenes serovar 1/2a (strain ATCC BAA-679 / EGD-e).